We begin with the raw amino-acid sequence, 238 residues long: Probable transcriptional regulatory protein YeeN (238 aa).

The protein belongs to the TACO1 family. YeeN subfamily.

It localises to the cytoplasm. The protein is Probable transcriptional regulatory protein YeeN of Salmonella typhimurium (strain LT2 / SGSC1412 / ATCC 700720).